The following is a 378-amino-acid chain: Cytochrome P450 2C15 (378 aa).

Residue Cys-323 coordinates heme.

Belongs to the cytochrome P450 family. The cofactor is heme.

Its subcellular location is the endoplasmic reticulum membrane. It localises to the microsome membrane. The enzyme catalyses an organic molecule + reduced [NADPH--hemoprotein reductase] + O2 = an alcohol + oxidized [NADPH--hemoprotein reductase] + H2O + H(+). Its function is as follows. Cytochromes P450 are a group of heme-thiolate monooxygenases. In liver microsomes, this enzyme is involved in an NADPH-dependent electron transport pathway. It oxidizes a variety of structurally unrelated compounds, including steroids, fatty acids, and xenobiotics. The polypeptide is Cytochrome P450 2C15 (CYP2C15) (Oryctolagus cuniculus (Rabbit)).